A 1427-amino-acid polypeptide reads, in one-letter code: DNA-directed RNA polymerase subunit beta' (1427 aa).

Zn(2+) is bound by residues Cys-66, Cys-68, Cys-81, and Cys-84. 3 residues coordinate Mg(2+): Asp-472, Asp-474, and Asp-476. Zn(2+)-binding residues include Cys-815, Cys-889, Cys-896, and Cys-899.

The protein belongs to the RNA polymerase beta' chain family. As to quaternary structure, the RNAP catalytic core consists of 2 alpha, 1 beta, 1 beta' and 1 omega subunit. When a sigma factor is associated with the core the holoenzyme is formed, which can initiate transcription. Mg(2+) serves as cofactor. Zn(2+) is required as a cofactor.

The catalysed reaction is RNA(n) + a ribonucleoside 5'-triphosphate = RNA(n+1) + diphosphate. Its function is as follows. DNA-dependent RNA polymerase catalyzes the transcription of DNA into RNA using the four ribonucleoside triphosphates as substrates. The polypeptide is DNA-directed RNA polymerase subunit beta' (Bacteroides fragilis (strain YCH46)).